The sequence spans 279 residues: MTTRITARFTELAAEGRPGLVTFITAGDPDYDTALSILRGLPEAGADVIEVGIPFTDPMADGPAIQAAGLRALKGGQTLAKTLDMVRAFRDENDTTPVVLMGYYNPIYIYGVPRFIADAKAAGVDGLIVVDLPPEEDNELCLPALDAGLDFIRLATPTTDEKRLPAVLAHTAGFVYYVSITGITGSATPDANAVAGAVARIKQHTTLPVAVGFGVKTPAQAAAIAAGADGVVVGSALVEAVRKTLDEDGKATVNTVPAVTALVQELAEAVRGVNRAAAE.

Active-site proton acceptor residues include Glu50 and Asp61.

It belongs to the TrpA family. Tetramer of two alpha and two beta chains.

It carries out the reaction (1S,2R)-1-C-(indol-3-yl)glycerol 3-phosphate + L-serine = D-glyceraldehyde 3-phosphate + L-tryptophan + H2O. Its pathway is amino-acid biosynthesis; L-tryptophan biosynthesis; L-tryptophan from chorismate: step 5/5. Functionally, the alpha subunit is responsible for the aldol cleavage of indoleglycerol phosphate to indole and glyceraldehyde 3-phosphate. In Azorhizobium caulinodans (strain ATCC 43989 / DSM 5975 / JCM 20966 / LMG 6465 / NBRC 14845 / NCIMB 13405 / ORS 571), this protein is Tryptophan synthase alpha chain.